Consider the following 252-residue polypeptide: Triosephosphate isomerase (252 aa).

10-12 (NWK) serves as a coordination point for substrate. The active-site Electrophile is His-96. Glu-168 functions as the Proton acceptor in the catalytic mechanism. Residues Gly-174, Ser-214, and 235–236 (GG) contribute to the substrate site.

The protein belongs to the triosephosphate isomerase family. As to quaternary structure, homodimer.

It localises to the cytoplasm. It carries out the reaction D-glyceraldehyde 3-phosphate = dihydroxyacetone phosphate. The protein operates within carbohydrate biosynthesis; gluconeogenesis. Its pathway is carbohydrate degradation; glycolysis; D-glyceraldehyde 3-phosphate from glycerone phosphate: step 1/1. Involved in the gluconeogenesis. Catalyzes stereospecifically the conversion of dihydroxyacetone phosphate (DHAP) to D-glyceraldehyde-3-phosphate (G3P). In Streptococcus pyogenes serotype M2 (strain MGAS10270), this protein is Triosephosphate isomerase.